Consider the following 266-residue polypeptide: 3-methyl-2-oxobutanoate hydroxymethyltransferase (266 aa).

Residues aspartate 45 and aspartate 84 each contribute to the Mg(2+) site. 3-methyl-2-oxobutanoate contacts are provided by residues 45 to 46 (DS), aspartate 84, and lysine 112. Glutamate 114 lines the Mg(2+) pocket. The active-site Proton acceptor is the glutamate 181.

This sequence belongs to the PanB family. In terms of assembly, homodecamer; pentamer of dimers. It depends on Mg(2+) as a cofactor.

The protein localises to the cytoplasm. It carries out the reaction 3-methyl-2-oxobutanoate + (6R)-5,10-methylene-5,6,7,8-tetrahydrofolate + H2O = 2-dehydropantoate + (6S)-5,6,7,8-tetrahydrofolate. It participates in cofactor biosynthesis; (R)-pantothenate biosynthesis; (R)-pantoate from 3-methyl-2-oxobutanoate: step 1/2. In terms of biological role, catalyzes the reversible reaction in which hydroxymethyl group from 5,10-methylenetetrahydrofolate is transferred onto alpha-ketoisovalerate to form ketopantoate. This chain is 3-methyl-2-oxobutanoate hydroxymethyltransferase, found in Pseudomonas fluorescens (strain SBW25).